Here is a 750-residue protein sequence, read N- to C-terminus: Photosystem I P700 chlorophyll a apoprotein A1 (750 aa).

Transmembrane regions (helical) follow at residues 70-93 (VFSAHFGQLSIIFLWLSGMYFHGA), 156-179 (LYCTAIGALIFAALMLFAGWFHYH), 195-219 (LNHHLAGLLGLGSLSWAGHQVHVSL), 291-309 (TAHHHLAIAILFLIAGHMY), 346-369 (WHAQLSLNLAMLGSLTIVVAHHMY), 385-411 (LSLFTHHMWIGGFLIVGAAAHAAIFMV), 433-455 (AIISHLNWACIFLGFHSFGLYIH), and 531-549 (FLVHHIHAFTIHVTVLILL). Cysteine 573 and cysteine 582 together coordinate [4Fe-4S] cluster. The next 2 helical transmembrane spans lie at 589–610 (HVFLGLFWMYNSISVVIFHFSW) and 664–686 (LSAYGLFFLGAHFVWAFSLMFLF). Histidine 675 contacts chlorophyll a'. Chlorophyll a contacts are provided by methionine 683 and tyrosine 691. Residue tryptophan 692 coordinates phylloquinone. Residues 724 to 744 (AVGVTHYLLGGIATTWAFFLA) traverse the membrane as a helical segment.

This sequence belongs to the PsaA/PsaB family. In terms of assembly, the PsaA/B heterodimer binds the P700 chlorophyll special pair and subsequent electron acceptors. PSI consists of a core antenna complex that captures photons, and an electron transfer chain that converts photonic excitation into a charge separation. The eukaryotic PSI reaction center is composed of at least 11 subunits. It depends on P700 is a chlorophyll a/chlorophyll a' dimer, A0 is one or more chlorophyll a, A1 is one or both phylloquinones and FX is a shared 4Fe-4S iron-sulfur center. as a cofactor.

Its subcellular location is the plastid. The protein resides in the chloroplast thylakoid membrane. It carries out the reaction reduced [plastocyanin] + hnu + oxidized [2Fe-2S]-[ferredoxin] = oxidized [plastocyanin] + reduced [2Fe-2S]-[ferredoxin]. Functionally, psaA and PsaB bind P700, the primary electron donor of photosystem I (PSI), as well as the electron acceptors A0, A1 and FX. PSI is a plastocyanin-ferredoxin oxidoreductase, converting photonic excitation into a charge separation, which transfers an electron from the donor P700 chlorophyll pair to the spectroscopically characterized acceptors A0, A1, FX, FA and FB in turn. Oxidized P700 is reduced on the lumenal side of the thylakoid membrane by plastocyanin. This Helianthus annuus (Common sunflower) protein is Photosystem I P700 chlorophyll a apoprotein A1.